A 238-amino-acid chain; its full sequence is UPF0758 protein Ajs_3450 (238 aa).

In terms of domain architecture, MPN spans 116–238; that stretch reads VFDSPQAVQH…ALSMAEQGLV (123 aa). Residues His187, His189, and Asp200 each contribute to the Zn(2+) site. The JAMM motif signature appears at 187-200; the sequence is HNHPSGSVQPSRAD.

This sequence belongs to the UPF0758 family.

This is UPF0758 protein Ajs_3450 from Acidovorax sp. (strain JS42).